A 356-amino-acid chain; its full sequence is Heparan sulfate 2-O-sulfotransferase 1 (356 aa).

The Cytoplasmic segment spans residues 1 to 11; that stretch reads MGLLRIMLPPK. A helical; Signal-anchor for type II membrane protein transmembrane segment spans residues 12–28; it reads LQLLAVLVFGVAVLFLE. A coiled-coil region spans residues 24 to 51; that stretch reads VLFLENQIQKLEESRGKLERAIARHEVR. The Lumenal portion of the chain corresponds to 29 to 356; the sequence is NQIQKLEESR…FYEKIYPKSN (328 aa). Lysine 83, threonine 84, alanine 85, serine 86, threonine 87, and serine 88 together coordinate adenosine 3',5'-bisphosphate. Residues asparagine 108 and asparagine 127 are each glycosylated (N-linked (GlcNAc...) asparagine). Catalysis depends on residues histidine 140 and histidine 142. The adenosine 3',5'-bisphosphate site is built by arginine 164 and serine 172. 2 cysteine pairs are disulfide-bonded: cysteine 201-cysteine 209 and cysteine 222-cysteine 228. Adenosine 3',5'-bisphosphate is bound by residues tyrosine 279, serine 285, threonine 290, and lysine 293.

The protein belongs to the sulfotransferase 3 family. Homotrimer. In terms of tissue distribution, expressed in heart, limb, head and trunk. At stages 20 and 24, it is expressed in the most regions of the first and second pharyngeal arche. In both wing and leg buds, it is detected at the overlying ectoderm and mesenchyme throughout stages 21, 23 and 24.

Its subcellular location is the golgi apparatus membrane. Catalyzes the transfer of a sulfo group from 3'-phospho-5'-adenylyl sulfate (PAPS) to the 2-OH position of iduronic acid (IdoA) or glucuronic acid (GlcA) within the heparan sulfate (HS) chain and participates in HS biosynthesis. The sequence is that of Heparan sulfate 2-O-sulfotransferase 1 from Gallus gallus (Chicken).